The chain runs to 158 residues: G-protein-signaling modulator 3 (158 aa).

The tract at residues 1-53 is disordered; it reads MEAERPQEDGEQSLPQDDQGWPPVNSTARPWRSAPPSPPPPGTRHTALGPRSG. Residues S33 and S37 each carry the phosphoserine modification. Pro residues predominate over residues 33 to 42; sequence SAPPSPPPPG. The segment covering 43–53 has biased composition (low complexity); that stretch reads TRHTALGPRSG. Phosphoserine is present on residues S54 and S57. T60 bears the Phosphothreonine mark. The GoLoco 1 domain maps to 60 to 82; that stretch reads TELLLDLVAEAQSRRLEEQRAAF. The disordered stretch occupies residues 78-97; that stretch reads QRAAFHTPKVPPSLAPTPPR. Positions 86–96 are enriched in pro residues; sequence KVPPSLAPTPP. GoLoco domains lie at 102-124 and 130-153; these read KEQL…RSDP and GQEL…RSRP.

Its subcellular location is the cytoplasm. Its function is as follows. Interacts with subunit of G(i) alpha proteins and regulates the activation of G(i) alpha proteins. In Rattus norvegicus (Rat), this protein is G-protein-signaling modulator 3 (Gpsm3).